The primary structure comprises 263 residues: Endonuclease 8 (263 aa).

Proline 2 (schiff-base intermediate with DNA) is an active-site residue. Glutamate 3 (proton donor) is an active-site residue. The active-site Proton donor; for beta-elimination activity is lysine 53. DNA is bound by residues glutamine 70, arginine 125, and asparagine 169. Residues 229–263 form an FPG-type zinc finger; that stretch reads KVFHRDGEACERCGGIIEKTTLSSRPFYWCPHCQK. Catalysis depends on arginine 253, which acts as the Proton donor; for delta-elimination activity.

The protein belongs to the FPG family. Requires Zn(2+) as cofactor.

It carries out the reaction 2'-deoxyribonucleotide-(2'-deoxyribose 5'-phosphate)-2'-deoxyribonucleotide-DNA = a 3'-end 2'-deoxyribonucleotide-(2,3-dehydro-2,3-deoxyribose 5'-phosphate)-DNA + a 5'-end 5'-phospho-2'-deoxyribonucleoside-DNA + H(+). Its function is as follows. Involved in base excision repair of DNA damaged by oxidation or by mutagenic agents. Acts as a DNA glycosylase that recognizes and removes damaged bases. Has a preference for oxidized pyrimidines, such as thymine glycol, 5,6-dihydrouracil and 5,6-dihydrothymine. Has AP (apurinic/apyrimidinic) lyase activity and introduces nicks in the DNA strand. Cleaves the DNA backbone by beta-delta elimination to generate a single-strand break at the site of the removed base with both 3'- and 5'-phosphates. The polypeptide is Endonuclease 8 (Salmonella enteritidis PT4 (strain P125109)).